The sequence spans 237 residues: MRKLSRRLRELYAKVEDRPYAPLEALQLLKETATAKFPESAEAHIRLGIDPKYTDQQLRTTVALPKGTGQTIRVAVIARGEKVTEASAAGADVVGSEELIDEIQKGRMDFDLLIATPDMMPQVAKVGRILGPRGLMPSPKAGTVTFDLPQAIQEFKAGKVEFRADRSGIVHVLFGKASFSAEDLLVNLKALQESIDRNRPSGAKGRYWRSVYVAATMGPSIQVDINALRELKLAEAA.

This sequence belongs to the universal ribosomal protein uL1 family. Part of the 50S ribosomal subunit.

Functionally, binds directly to 23S rRNA. The L1 stalk is quite mobile in the ribosome, and is involved in E site tRNA release. Protein L1 is also a translational repressor protein, it controls the translation of the L11 operon by binding to its mRNA. The sequence is that of Large ribosomal subunit protein uL1 from Thermosynechococcus vestitus (strain NIES-2133 / IAM M-273 / BP-1).